Here is a 427-residue protein sequence, read N- to C-terminus: Enolase (427 aa).

Position 163 (glutamine 163) interacts with (2R)-2-phosphoglycerate. Glutamate 205 acts as the Proton donor in catalysis. Mg(2+) is bound by residues aspartate 242, glutamate 283, and aspartate 310. The (2R)-2-phosphoglycerate site is built by lysine 335, arginine 364, serine 365, and lysine 386. Lysine 335 acts as the Proton acceptor in catalysis.

Belongs to the enolase family. Requires Mg(2+) as cofactor.

The protein resides in the cytoplasm. The protein localises to the secreted. Its subcellular location is the cell surface. The catalysed reaction is (2R)-2-phosphoglycerate = phosphoenolpyruvate + H2O. Its pathway is carbohydrate degradation; glycolysis; pyruvate from D-glyceraldehyde 3-phosphate: step 4/5. In terms of biological role, catalyzes the reversible conversion of 2-phosphoglycerate (2-PG) into phosphoenolpyruvate (PEP). It is essential for the degradation of carbohydrates via glycolysis. The protein is Enolase of Salinispora tropica (strain ATCC BAA-916 / DSM 44818 / JCM 13857 / NBRC 105044 / CNB-440).